The following is a 328-amino-acid chain: GMP reductase (328 aa).

Residue C176 is the Thioimidate intermediate of the active site. I205 to I228 serves as a coordination point for NADP(+).

It belongs to the IMPDH/GMPR family. GuaC type 2 subfamily.

The catalysed reaction is IMP + NH4(+) + NADP(+) = GMP + NADPH + 2 H(+). In terms of biological role, catalyzes the irreversible NADPH-dependent deamination of GMP to IMP. It functions in the conversion of nucleobase, nucleoside and nucleotide derivatives of G to A nucleotides, and in maintaining the intracellular balance of A and G nucleotides. In Streptococcus pneumoniae (strain P1031), this protein is GMP reductase.